The primary structure comprises 232 residues: Orotate phosphoribosyltransferase (232 aa).

5-phospho-alpha-D-ribose 1-diphosphate contacts are provided by residues R107, K108, K111, and 133–141 (EDLTTDGGS). T137 provides a ligand contact to orotate.

It belongs to the purine/pyrimidine phosphoribosyltransferase family. PyrE subfamily. As to quaternary structure, homodimer. Mg(2+) is required as a cofactor.

It catalyses the reaction orotidine 5'-phosphate + diphosphate = orotate + 5-phospho-alpha-D-ribose 1-diphosphate. It functions in the pathway pyrimidine metabolism; UMP biosynthesis via de novo pathway; UMP from orotate: step 1/2. In terms of biological role, catalyzes the transfer of a ribosyl phosphate group from 5-phosphoribose 1-diphosphate to orotate, leading to the formation of orotidine monophosphate (OMP). In Cereibacter sphaeroides (strain ATCC 17029 / ATH 2.4.9) (Rhodobacter sphaeroides), this protein is Orotate phosphoribosyltransferase.